A 377-amino-acid chain; its full sequence is Pseudouridylate synthase RPUSD4, mitochondrial (377 aa).

The transit peptide at 1 to 46 (MAAPCLRTPGVQLLSMSSRPGRLFTPGSWSFCSSATSSRPLNAQRL) directs the protein to the mitochondrion. D153 is an active-site residue.

The protein belongs to the pseudouridine synthase RluA family. In terms of assembly, interacts with 16S mt-rRNA, mt-tRNA(Phe) and mt-tRNA(Met). Forms a regulatory protein-RNA complex, consisting of RCC1L, NGRN, RPUSD3, RPUSD4, TRUB2, FASTKD2 and 16S mt-rRNA.

The protein localises to the mitochondrion matrix. The protein resides in the nucleus. Its subcellular location is the cytoplasm. It catalyses the reaction uridine in 5S rRNA = pseudouridine in 5S rRNA. The catalysed reaction is a uridine in tRNA = a pseudouridine in tRNA. The enzyme catalyses a uridine in mRNA = a pseudouridine in mRNA. Functionally, catalyzes uridine to pseudouridine isomerization (pseudouridylation) of different mitochondrial RNA substrates. Acts on position 1397 in 16S mitochondrial ribosomal RNA (16S mt-rRNA). This modification is required for the assembly of 16S mt-rRNA into a functional mitochondrial ribosome. As a component of a functional protein-RNA module, consisting of RCC1L, NGRN, RPUSD3, RPUSD4, TRUB2, FASTKD2 and 16S mt-rRNA, controls 16S mt-rRNA abundance and is required for intra-mitochondrial translation. Acts on position 39 in mitochondrial tRNA(Phe). Also catalyzes pseudouridylation of mRNAs in nucleus: acts as a regulator of pre-mRNA splicing by mediating pseudouridylation of pre-mRNAs at locations associated with alternatively spliced regions. Pseudouridylation of pre-mRNAs near splice sites directly regulates mRNA splicing and mRNA 3'-end processing. This Mus musculus (Mouse) protein is Pseudouridylate synthase RPUSD4, mitochondrial.